Reading from the N-terminus, the 241-residue chain is Uridylate kinase (241 aa).

Lys-12 to Gly-15 serves as a coordination point for ATP. The involved in allosteric activation by GTP stretch occupies residues Gly-20 to Gly-25. Gly-54 is a binding site for UMP. 2 residues coordinate ATP: Gly-55 and Arg-59. UMP-binding positions include Asp-74 and Thr-135–Thr-142. Asn-163, Tyr-169, and Asp-172 together coordinate ATP.

This sequence belongs to the UMP kinase family. In terms of assembly, homohexamer.

It is found in the cytoplasm. The enzyme catalyses UMP + ATP = UDP + ADP. The protein operates within pyrimidine metabolism; CTP biosynthesis via de novo pathway; UDP from UMP (UMPK route): step 1/1. Allosterically activated by GTP. Inhibited by UTP. Catalyzes the reversible phosphorylation of UMP to UDP. The polypeptide is Uridylate kinase (Lactobacillus johnsonii (strain CNCM I-12250 / La1 / NCC 533)).